Reading from the N-terminus, the 667-residue chain is MIDRQNDNLFDLVAPYEPAGDQPAAIETLTKNFEAGAKAQVLMGATGTGKTFTMSNVIKNLNKPTLIISHNKTLAGQLYAEFKQFFPNNAVEYFVSYYDYYQPEAYVPSSDTYIEKDSSINDEIDKLRHSATSSLLERNDVIVVASVSCIFGLGDPREYQNHVLSLRPGMEVERNDLLRQLVDIQFERNDIDFQRGRFRVRGDVVEIFPASRDDHALRVEFFGDEIDRIVEVDALTGEVIGERSHVAIFPATHFMTNDEKMEKAIESIKAELAERLAVLKGEGKLLEAQRLEQRTNYDLEMMQEMGYCSGIENYSRHMEDRQAGEPPYTLLDFFPKDSIMMIDESHVTMPQIRGMYNGDRARKQMLIDYGFRLPSALDNRPLTLPEFEEHVNEIMYVSATPGPYEAEQTDIQVDQIIRPTGLLDPNIEVRPIMGQIDDLVGEINDRIEKNERVFITTLTKKMSEDLTDYLKELGIKVRYLHSDIKTLERTEIIRDLRLGKFDVLIGINLLREGIDVPEVSLVAILDADKEGFLRSERSLIQTIGRASRNEHGQVLLYADKITDSMRHAIDETKRRRTIQEDYNTAHNITPKTIIKPIRDAISMVQSVEHPEEIKMTNEIDLENMSKAEKLEMVERLSEQMRLAAKKLDFEQAATLRDTILELKSEID.

Residues 31–414 (KNFEAGAKAQ…EAEQTDIQVD (384 aa)) enclose the Helicase ATP-binding domain. ATP is bound at residue 44 to 51 (GATGTGKT). Residues 97–120 (YYDYYQPEAYVPSSDTYIEKDSSI) carry the Beta-hairpin motif. The Helicase C-terminal domain occupies 435–597 (QIDDLVGEIN…ITPKTIIKPI (163 aa)). Residues 630–665 (LEMVERLSEQMRLAAKKLDFEQAATLRDTILELKSE) enclose the UVR domain.

The protein belongs to the UvrB family. Forms a heterotetramer with UvrA during the search for lesions. Interacts with UvrC in an incision complex.

It localises to the cytoplasm. Functionally, the UvrABC repair system catalyzes the recognition and processing of DNA lesions. A damage recognition complex composed of 2 UvrA and 2 UvrB subunits scans DNA for abnormalities. Upon binding of the UvrA(2)B(2) complex to a putative damaged site, the DNA wraps around one UvrB monomer. DNA wrap is dependent on ATP binding by UvrB and probably causes local melting of the DNA helix, facilitating insertion of UvrB beta-hairpin between the DNA strands. Then UvrB probes one DNA strand for the presence of a lesion. If a lesion is found the UvrA subunits dissociate and the UvrB-DNA preincision complex is formed. This complex is subsequently bound by UvrC and the second UvrB is released. If no lesion is found, the DNA wraps around the other UvrB subunit that will check the other stand for damage. This chain is UvrABC system protein B, found in Latilactobacillus sakei subsp. sakei (strain 23K) (Lactobacillus sakei subsp. sakei).